A 343-amino-acid polypeptide reads, in one-letter code: C5a anaphylatoxin chemotactic receptor 2 (343 aa).

The Extracellular segment spans residues 1–44 (MLNDTTSKDYEYEYDQEQYSDLLNVPVDCPAGNCFSNDAYLIVL). The N-linked (GlcNAc...) asparagine glycan is linked to Asn3. Residues 45–67 (LGLYSVIFLVGVPGNTLLAWVTW) form a helical membrane-spanning segment. Residues 68–78 (KESRHRLGASW) lie on the Cytoplasmic side of the membrane. The helical transmembrane segment at 79–101 (FLHLTMADLLCCVSLPFLAVPIA) threads the bilayer. Residues 102–120 (QKGHWPYGTAGCWLLSSIT) are Extracellular-facing. Cys113 and Cys192 are oxidised to a cystine. A helical transmembrane segment spans residues 121-143 (VLSMYASVLLLTGLSGDLFLLAF). The Cytoplasmic portion of the chain corresponds to 144–155 (RPSWKNADQRTC). A helical membrane pass occupies residues 156-178 (GVRVVQVSSWMLALLLTVPGAVY). At 179 to 208 (RKLLQEHYPPRLVCGTNYGGSVTAEVTITT) the chain is on the extracellular side. Residues 209–231 (VRFLFGFLVPLVFMASCHGILQR) form a helical membrane-spanning segment. Topologically, residues 232–243 (QMARRHWPLGTA) are cytoplasmic. Residues 244–266 (VVVGFFICWTPFHLLRVIIAVAS) form a helical membrane-spanning segment. Residues 267–280 (SHSPLLAWALEAEP) lie on the Extracellular side of the membrane. A helical transmembrane segment spans residues 281-300 (LVTGLALAHSALNPIMFLYF). Residues 301-343 (GRKQLCKSLQAACHWALRDLQDEEESAVTKVSTSQEMVSEMPV) lie on the Cytoplasmic side of the membrane. Ser326 carries the post-translational modification Phosphoserine.

Belongs to the G-protein coupled receptor 1 family. In terms of assembly, interacts with C3 (the anaphylatoxin peptide C3a and the adipogenic hormone ASP); the interaction occurs with higher affinity for ASP, enhancing the phosphorylation and activation of GPR77, recruitment of ARRB2 to the cell surface and endocytosis of GRP77.

It localises to the cell membrane. Functionally, receptor for the chemotactic and inflammatory C3a, C4a and C5a anaphylatoxin peptides and also for their dearginated forms ASP/C3adesArg, C4adesArg and C5adesArg respectively. Couples weakly to G(i)-mediated signaling pathways. In Rattus norvegicus (Rat), this protein is C5a anaphylatoxin chemotactic receptor 2 (C5ar2).